The primary structure comprises 63 residues: Beta-defensin 4 (63 aa).

The first 22 residues, 1–22, serve as a signal peptide directing secretion; it reads MRIHYLLFSFLLVLLSPLSAFT. Gln23 bears the Pyrrolidone carboxylic acid mark. Intrachain disulfides connect Cys31/Cys59, Cys38/Cys52, and Cys42/Cys60.

Belongs to the beta-defensin family. In terms of tissue distribution, highly expressed in lung.

Its subcellular location is the secreted. Its function is as follows. Exhibits antimicrobial activity against Gram-negative bacteria and Gram-positive bacteria. May act as a ligand for C-C chemokine receptor CCR6. Binds to CCR6 and induces chemotactic activity of CCR6-expressing cells. This Rattus norvegicus (Rat) protein is Beta-defensin 4 (Defb4).